A 290-amino-acid chain; its full sequence is 33 kDa chaperonin (290 aa).

2 cysteine pairs are disulfide-bonded: Cys235-Cys237 and Cys268-Cys271.

It belongs to the HSP33 family. Post-translationally, under oxidizing conditions two disulfide bonds are formed involving the reactive cysteines. Under reducing conditions zinc is bound to the reactive cysteines and the protein is inactive.

It localises to the cytoplasm. Functionally, redox regulated molecular chaperone. Protects both thermally unfolding and oxidatively damaged proteins from irreversible aggregation. Plays an important role in the bacterial defense system toward oxidative stress. This Streptococcus pneumoniae (strain CGSP14) protein is 33 kDa chaperonin.